The following is a 60-amino-acid chain: Ferredoxin (60 aa).

4Fe-4S ferredoxin-type domains are found at residues 2–29 and 30–60; these read KVRVDADACIGCGVCENLCPDVFQLGDD and GKAKVLQPETDLPCAKDAADSCPTGAISVEE. 3 residues coordinate [4Fe-4S] cluster: cysteine 10, cysteine 13, and cysteine 16. A disulfide bond links cysteine 20 and cysteine 43. Residue cysteine 51 coordinates [4Fe-4S] cluster.

As to quaternary structure, monomer. The cofactor is [4Fe-4S] cluster.

Its function is as follows. Ferredoxins are iron-sulfur proteins that transfer electrons in a wide variety of metabolic reactions. This chain is Ferredoxin (fdx), found in Thermotoga maritima (strain ATCC 43589 / DSM 3109 / JCM 10099 / NBRC 100826 / MSB8).